A 235-amino-acid polypeptide reads, in one-letter code: Phosphoribosylaminoimidazole-succinocarboxamide synthase (235 aa).

Belongs to the SAICAR synthetase family.

It catalyses the reaction 5-amino-1-(5-phospho-D-ribosyl)imidazole-4-carboxylate + L-aspartate + ATP = (2S)-2-[5-amino-1-(5-phospho-beta-D-ribosyl)imidazole-4-carboxamido]succinate + ADP + phosphate + 2 H(+). It functions in the pathway purine metabolism; IMP biosynthesis via de novo pathway; 5-amino-1-(5-phospho-D-ribosyl)imidazole-4-carboxamide from 5-amino-1-(5-phospho-D-ribosyl)imidazole-4-carboxylate: step 1/2. This chain is Phosphoribosylaminoimidazole-succinocarboxamide synthase, found in Clostridium perfringens (strain SM101 / Type A).